The sequence spans 132 residues: Small ribosomal subunit protein uS9 (132 aa).

Belongs to the universal ribosomal protein uS9 family.

The sequence is that of Small ribosomal subunit protein uS9 from Methanothrix thermoacetophila (strain DSM 6194 / JCM 14653 / NBRC 101360 / PT) (Methanosaeta thermophila).